The sequence spans 260 residues: UPF0246 protein BPSL1241 (260 aa).

It belongs to the UPF0246 family.

This Burkholderia pseudomallei (strain K96243) protein is UPF0246 protein BPSL1241.